A 5381-amino-acid chain; its full sequence is MSSHSGGTDWNSVIKALLLSRTGALNKNEVVNLLKAITRCEHEFFDDEGSFVPFYTAFAALAADKLMQIKSICQTQICQLHDATAVLIRFILFRLPKVSVFESKWLLAALKMLCEGRENASSAVAQFDYSAVAGVVKSSKHPESSNKSIMSMAGSTTGGAGAGGSNDKESPKLEIKRSRSDLSSVILQQLLAPLEPGKMTWVPLSEEITDCTEQLLAANVEVFQEANGVDTLLDICVGLPILSRYRMKYMETINAGKPLYLPLTQAEATTVKSSMNHMLTDLSIVGQAYALIVMQPLTPSRIEKLSMCGISALYNAVLTSIATSVLSMGQASSAQKQQQQQTAAAASTSQGSGGGLSSVQTSKDHDEFEEQASGIVNKALEIYSSIGEMFKSSARMYIYQNHLCYGSWLLISGIQGAMGASGSASAETAAKAAAATKVASKTESITAPSTPIARVNLFKVQQGFGELNAAIANHSIKLLSELIEDLKIESACGQSSVTDPETLPEPAQFDILQNYTSLERIVRVLNTATLHQLFTFLATVAYRKACTLKRASTKDRTECDPISYSDSTTCLNESMSYSDNSEEDDSESYLGHWFKETLSPETHDDNANTSSQERSGEQKSALVPKLDEPHEYLELSADIFCFLDQFLANRHAYMQRYVKAGVSDQQMLLMANIIKDFDRDVMRNDSEQQSPPSTAAAVAAATGAGSSGSSAKWQASMIRFSGAAGRYIHNLISTGLLSEQLQSNLLQHLAISPWSTDTNTWPLQVYPSTLSVLVQILLLKPIQEKEAACLSVWHRLINTLVDGVCSSSSAGDSDYEDINIEHAQLLLFLFHSLNLMQKKSILLLTAGGVIRCAEVCRGISAERVVRNSQMMLLSRLLVFLEYLMKHLYHAPPELLDQVRWILFSVSSMPETQKVSDLINSRTKLNSYCRQDIEEKFRKSSGEYGSNIRPTFYSLVVKEPEKAYWVSEFKLDGLAWNFILCTPDKLKYPLLVDALVDILNIADMSSFSRKENSESNSIHNLCAMQYCFTNTWKLLLGLPPSTSHVEALRIERAPNLHSLVWSTRLPLATSHYLIVNSLIKQGMYTQYAESLYTQVGDTTADIRYNLKQTILGVEAFNQQMSNKGIPRLSELILFDALVAHMQAVAWAEKEGFKLLRKDCEDSSGGDQSSCTSAASSSGGNATDHDHPEVYSSNESIDEEKSKHEDDQGLSTETLQRNQMINELLIKLMDSYRYLSEIVREQMLKQLSSTTPEHVLNLIVPIVSDKPAIMLELHAAFLKLLPNEDKQLIANEWPKCLMVNDSAFDGKQHPVEPYTLNVIDAHITELTRGSGGVAYSTLHTLKHCLKTILHLMELLLPYASNCTEMDAQLKPLLIASMLDMRTDYLQGQSEQCLREILSGLTLEAQKLLLYEHMIGYCYRMLIEFAAELRQPAAGGTPLDQERALFNESMLFAVLKTFIKMLEKPTAVQAMRQFFHDQKTGSLTTLLLSFTGTTLPLSYARKMLQFVERLFEQSTRADSQFQHEDLVDCFSDLATVDVARLKLWLAHIIYGPNMTAGDVSNSETMDPTCRLLTSIMQPSSSSSSNAQTPTNMATVSAMPSISDQLDAMDIDYDCGAAAGAAGAAPNTSQILSLWQAAQPNPSEESSQACDHSEGGEQRQSERNGGLLLSITKYLVRDQSKAGPIAAPLFQALLQLGQTLISPPHDGCDFADVLQIMITLADASPARGHVALFNTTLLWLELAKLQLPDKHLRHAENVSALLRYLSELLQSIGYRGSRQHMPPWDDELQTDIDDLYDELAEEEQDSLLDDSDEDTLNNKLCTFSQTQKEFMNQHWYHCHTCNMINTVGVCSVCARVCHKGHDVSYAKYGNFFCDCGAKEDGSCQALSRRLGSGEVRESVGPGGSSSCSYLPSHMSLLASKKRSNTAPGATQQQHGAPARKDSISSERIQLLGKLLEPYRETLQHQEQWMLVVRCILEYFDVLLPSIRENCTLYSIVGCHRRATAALQRLHQLEQSFQITDQLMFATLGSQEGAFENVRMNYSGDQGQTIKHLLTSGTIRRVAFCCLSSPHGRRQQLAVSHEKGKVTILQLSALLKQADASKRKLTLTQLSSAPIACTVLSLAANPCNEDCLAVCGLKECHVLTFSSSGSTNEHIVITPQLENGNFLKKAMWLPGSQTLLAIVTTDYVKIYDLSVDTISPKYYYLVAVGKIKDCTFMYHQQDGSGSYFMLSFTSSGYIYTQQLDQQSLAVHGDFYVTNTLELSHQHIKDINGQVCGGGVSIYYSHALQLLFYSYTCGRSFCSPLTNVNEGVKGIYHLDINNTAASTASKSSSASKVPLQSLVGWTEVAGHPGLIYASMHTSNNPVILMITPERIYMQEIKAQSAKSRIMDVVGIRHSVAGTEKTTLLLLCEDGSLRIFSAQPEHTSFWLSPQVQPFGNQLYSSTLLAKNTTNNPQGKSKGGGSAAAGKLLHRKASSQQHQKQLTSGGQPIFPIDFFEHCNMLADVEFGGNDLLQIYNKQKLKTRLFSTGMFVASTKATGFTLEVVNNDPNVVMVGFRVMLGTQDIQRAPVSVTILGRTIPTTMRKARWFDIPLTREEMFQSDKMLKVVFAKSQDPEHVTLLDSIEVYGKSKELVGWPDDSEDVPAPSSGPTPVTATQQSAAANFGEGFNCITQLDRMVNHLLEVLDCALHLLGGSAVAAPLRSKVVKTASGLLLLPTPNPVQTQARYVLATLYGSRAAYHSFKDGVILHFVHGELQAMQPKLQQLESLQEIDPEAFYRLILLVRGVANSRPQSLAKICLENSYDLVPDLMRIVLELHKITPDLDEPVNIVRRGLCQPETIVHCLVEIMYGFALADPGQVGRMTQYFIDLLKHDATVISHSAKEALILLLSPRMKRRKVAAIAVITPPACSTPTPQMQALQAVAASAANDIIEEAAGVAAGQDQDNAAAALLEAVEGGLPGQQANHQLLNLEAFMGGGFPRLLGLPEDGDDEAIMDIAIALSLQQHGGADANALHSLQQGLANIQGIRQAAANAAAASVSVSVSAGGSDDEGSNVATDGSTLRTSPAEPAGSGGSESGGSGVESIGGTSARSSNFGDHPNTTPPRQSCSSVKDGEPGEEQQPGPSGSGGSASVPGGGLSAMSSTEDNNEINEDEKLQKLHDLRIAVLESIIQHLGTFDLCNGLQAIPLIQVIHMLTTDLNGNNERDQQVLQELLQALVEYVEIGKRGAASRMENKCPGNEVRLALLSLFGVMMGKTKSKQTGTTSPPHQFKDNSSFVASTTANVLSKSGAFVYALEALNTLLVHWKTVLGDPYAPGQAAAPIASGGATSGPGVQLLKPVKHGPKPDISILIPQNYLKNYPDIFESYDGLLTEIIVRLPYQILRLSSAHPDNYDSSFCEAMTFTLCEYMMLNLNTLLRRQVRKLLMYICGSKEKFRMYRDGHSLDAHFRVVKRVCSIVSSKTGAPYNANPPMLSYDSLVDLTEHLRTCQEISQMRTGNWQKFCVVHEDALAMLMEIACYQLDDGVSPIIIQLLQAAVCNMPANKQQQQQQQPPPAVVSASSKLRSDREKSEDTDAYYSKFDPAQCGTFVHQIFRYACDALIIRFVRIFLLENNISQLRWQAHSFMTGLFEHANERQREKLLTIFWNLWPLVPTYGRRTAQFVDLLGYLTLTTRSITERLPEFVSRAVEVLRTQNELLCKHPNAPVYTTLESILQMNGYYLESEPCLVCNNPEVPMANIKLPSVKSDSKYTTTTMIYKLVQCHTISKLIVRIADLKRTKMVRTINVYYNNRSVQAVVELKNRPALWHKARSVSLQSGQTELKIDFPLPITACNLMIEFADFFETVSGSSENLQCPRCSAAVPAYPGVCGNCGENVFQCHKCRAINYDEKDPFLCHSCGFCKYAKFDFSMYARVCCAVDPIESAEDRAKTVLMIHTSLERADRIYHQLLANKQLLELLIQKVAEHRINDRLVEDNMASVHSTSQVNKIIQLLAQKYCVESRASFEELSKIVQKVKACRSELVAYDRQQQDLPPSNLALVLGAENPTTNRCYGCALASTEQCLTLLRAMAYNYDCRMGLYSQGLVSELAEHNLRRGTPQIQNEVRNLLVVLTKDNAEACMHLLQLVTSRVKSALMGSIPLISLEAAVHQEMTLLEVLLSQDDLCWEYKLKVIFELFISNCKLPRGPVASVLHPCLRILQSLINPTISGSGSGGKPVSAIELSNIKLPEGNTIDYRAWLNSDQNHEYLAWSSRMPISHHQQDAPAGTKPKSSKQQQSAGTETPPRKSKEAARAAYLGEKFGKRWRSNVLDKQRVTKPLVFNAEWIQPLLFNENSRFGRQLACTLLGGLARTHERKQQALNLLTSFLYHVGDAGEASNEYLALYRSIATESPWLQYLVLRGVLCKISSLLATEIAKVHCMEEHSLSSDLTLGYALRRYVELLWLFLECPNIRRTYKTRLLGPVLESYLALRSLVVQRTRHIDEAQEKLLEMLEEMTSGTEEETRAFMEILIDTVDKTRMNDIKTPVFIFERLYSIIHPEEHDESEFYMTLEKDPQQEDFLQGRMLGNPYPSGEMGLGPLMRDVKNKICTDCELIALLEDDNGMELLVNNKIISLDLPVKDVYKKVWLAEGGDRDAMRIVYRMRGLLGDATEEFVETLNNKSQEAVDTEQLYRMANVLADCNGLRVMLDRIGSLQRISRQRELIQVLLKLFLICVKVRRCQEVLCQPEIGAINTLLKVLQMCLQSENDSIQSAVTEQLLEIMETLLSKAASDTLDSFLQFSLTFGGPEYVSALISCTDCPNVRNNPSVLRHLIRVLAALVYGNEVKMALLCEHFKDTLNFKRFDNERTPEEEFKLELFCVLTNQIEHNCIGGTLKDYIVSLGIVERSLAYITEHAPCVKPTLLRTDSDELKEFISRPSLKYILRFLTGLSNHHEATQVAISKDIIPIIHRLEQVSSDEHVGSLAENLLEALSTDAATAARVQQVRDFTRAEKKRLAMATREKQLDALGMRTNEKGQVTAKGSILQKIEKLRDETGLTCFICREGYACQPEKVLGIYTFTKRCNVEEFELKSRKTIGYTTVTHFNVVHVDCHTSAIRLTRGRDEWERASLQNANTRCNGLLPLWGPSVLETTFSASMTRHSSYMQESTQRCDISYTSSIHDLKLLLVRFAWERSFHDDAGGGGPQSNMHFVPYLLFYSIYMLLSSRSAARDSKTVLAYLTAPPSEKWLECGFEVEGPLYMITISVTLHSRELWNKHKVAHLKRMLAVAQARHVSPSVLCKALLAPADRQVKDYSVYKPYLMMWAMIDMIYNILFKLVTMPKEEAWPVSLFDYIRKNDEAMLKSTDGILHILTEELLPCTSFGEFCDVAGLLTLIEQPDSFIEDLLASLPSTTSSS.

6 disordered regions span residues 140–174, 339–364, 599–621, 683–709, 1162–1212, and 1632–1659; these read KHPE…PKLE, QQQT…TSKD, SPET…QKSA, RNDS…SSGS, SGGD…STET, and QAAQ…QSER. Positions 339 to 350 are enriched in low complexity; the sequence is QQQTAAAASTSQ. Composition is skewed to low complexity over residues 690 to 709 and 1167 to 1176; these read SPPS…SSGS and SSCTSAASSS. Over residues 1632-1646 the composition is skewed to polar residues; sequence QAAQPNPSEESSQAC. A compositionally biased stretch (basic and acidic residues) spans 1647-1658; the sequence is DHSEGGEQRQSE. Residues 1815–1884 form a UBR-type zinc finger; it reads KLCTFSQTQK…EDGSCQALSR (70 aa). Disordered stretches follow at residues 1917–1939, 2443–2479, 2632–2652, 3037–3143, 3537–3562, and 4247–4280; these read KRSN…KDSI, KNTT…KQLT, PDDS…TATQ, VSAG…DNNE, KQQQ…DREK, and HHQQ…KEAA. Composition is skewed to polar residues over residues 1920-1930, 2470-2479, 2643-2652, and 3048-3058; these read NTAPGATQQQH, SSQQHQKQLT, SGPTPVTATQ, and NVATDGSTLRT. A compositionally biased stretch (gly residues) spans 3065–3075; sequence GSGGSESGGSG. Positions 3084–3104 are enriched in polar residues; the sequence is ARSSNFGDHPNTTPPRQSCSS. Over residues 3119–3132 the composition is skewed to gly residues; sequence SGSGGSASVPGGGL. Residues 4904–5374 are UBR4 E3 catalytic module; the sequence is PSLKYILRFL…SFIEDLLASL (471 aa). The segment at 5022-5136 adopts a HemiRING-type zinc-finger fold; the sequence is GLTCFICREG…SSYMQESTQR (115 aa). The Zn(2+) site is built by C5025, C5028, H5074, and C5077. Positions 5139–5374 constitute a UZI domain; sequence ISYTSSIHDL…SFIEDLLASL (236 aa).

It belongs to the UBR4 family.

Has a role in growth of the perineurial glial layer of the larval peripheral nerve. May have a role in male fertility and eye development or function. May bind calmodulin. In Drosophila pseudoobscura pseudoobscura (Fruit fly), this protein is Protein purity of essence.